The sequence spans 162 residues: Interleukin-15 (162 aa).

The N-terminal stretch at 1-29 (MRISKPHLRSISIQCYLCLLLKSHFLTEA) is a signal peptide. Positions 30–48 (GIHVFILGCFSAGLPKTEA) are excised as a propeptide. 2 disulfides stabilise this stretch: Cys-83–Cys-133 and Cys-90–Cys-136. Asn-127 is a glycosylation site (N-linked (GlcNAc...) asparagine).

This sequence belongs to the IL-15/IL-21 family.

It is found in the secreted. Functionally, cytokine that plays a major role in the development of inflammatory and protective immune responses to microbial invaders and parasites by modulating immune cells of both the innate and adaptive immune systems. Stimulates the proliferation of natural killer cells, T-cells and B-cells and promotes the secretion of several cytokines. In monocytes, induces the production of IL8 and monocyte chemotactic protein 1/CCL2, two chemokines that attract neutrophils and monocytes respectively to sites of infection. Unlike most cytokines, which are secreted in soluble form, IL15 is expressed in association with its high affinity IL15RA on the surface of IL15-producing cells and delivers signals to target cells that express IL2RB and IL2RG receptor subunits. Binding to its receptor triggers the phosphorylation of JAK1 and JAK3 and the recruitment and subsequent phosphorylation of signal transducer and activator of transcription-3/STAT3 and STAT5. In mast cells, induces the rapid tyrosine phosphorylation of STAT6 and thereby controls mast cell survival and release of cytokines such as IL4. This is Interleukin-15 (IL15) from Chlorocebus aethiops (Green monkey).